Here is a 78-residue protein sequence, read N- to C-terminus: Beta-defensin 29 (78 aa).

The N-terminal stretch at 1–23 (MPVTKSYFMTVVVVLILVDETTG) is a signal peptide. 3 cysteine pairs are disulfide-bonded: C40-C67, C47-C61, and C51-C68.

Belongs to the beta-defensin family. As to expression, highly expressed in the cauda epididymis.

It localises to the secreted. In terms of biological role, has antibacterial activity. The protein is Beta-defensin 29 (Defb29) of Mus musculus (Mouse).